We begin with the raw amino-acid sequence, 150 residues long: Macrodomain Ter protein (150 aa).

The protein belongs to the MatP family. In terms of assembly, homodimer.

Its subcellular location is the cytoplasm. Functionally, required for spatial organization of the terminus region of the chromosome (Ter macrodomain) during the cell cycle. Prevents early segregation of duplicated Ter macrodomains during cell division. Binds specifically to matS, which is a 13 bp signature motif repeated within the Ter macrodomain. The protein is Macrodomain Ter protein of Escherichia coli O81 (strain ED1a).